A 185-amino-acid chain; its full sequence is Protein LPA2 (185 aa).

A chloroplast-targeting transit peptide spans 1–46 (MALQIHSPCSFSTRPYHLFFTTRNPRFAIKCQNSQIESDTTEDPSR). Residues 35 to 105 (QIESDTTEDP…VFMSEEGAAK (71 aa)) are disordered. The segment covering 47–75 (SKNSSSSGVGFGSPASSSSPAKKLSAATS) has biased composition (low complexity). Residues 83 to 92 (KREVNRRAPV) are compositionally biased toward basic and acidic residues. The next 2 helical transmembrane spans lie at 115–135 (AFLL…IILA) and 152–172 (VYPV…AYGV).

It localises to the plastid. It is found in the chloroplast membrane. This Arabidopsis thaliana (Mouse-ear cress) protein is Protein LPA2.